The primary structure comprises 330 residues: uncharacterized protein (330 aa).

This is an uncharacterized protein from Acanthamoeba polyphaga (Amoeba).